The sequence spans 431 residues: MQASIESTGNLERRLSFSLPEDRLQSHIVGRLGEIARTTRIKGFRPGKVPAKVIEQRFGAQVRGEALDGLLRETFDAAVREHDLRIVGSPRIDKGEEGEFSFVATVEVVPDFGDIDVSKLTVVRHSAEISDADIDQMIENLQNQRRTWAPVSRGAQDGDLVAVETWSQAGEERLPAEGTEKGSIVLGQGMMFETIEKGLVGLAKGEEKTLDVEFPADWRVPVLAGKTVQVTVKVAEVSEPVVPAVDEAFIKSFGVKGGDVEQFRSDIRANLERELKGALMNRLRREVGEQLIAAYASVEMPPRLVENEARAMLAQQVEQIRRNGQNVGEIPADAHEGFKDAAAKRVLVGLLVGEVARVNDLRLEAKRLNETMRLIASTYEEPEQVIEMYRNDPQLMSGLQNRVMEEQVIDWIAERAQHTEEKLSFQDAIRQ.

One can recognise a PPIase FKBP-type domain in the interval 158-243; that stretch reads GDLVAVETWS…VAEVSEPVVP (86 aa).

Belongs to the FKBP-type PPIase family. Tig subfamily.

It is found in the cytoplasm. It catalyses the reaction [protein]-peptidylproline (omega=180) = [protein]-peptidylproline (omega=0). Involved in protein export. Acts as a chaperone by maintaining the newly synthesized protein in an open conformation. Functions as a peptidyl-prolyl cis-trans isomerase. This chain is Trigger factor, found in Stenotrophomonas maltophilia (strain R551-3).